The chain runs to 963 residues: Ubiquitin carboxyl-terminal hydrolase 11 (963 aa).

Residues 64-93 are disordered; sequence VTEDREPQHEELPGLDSQWRQIENGESGRE. Residues 65 to 75 are compositionally biased toward basic and acidic residues; sequence TEDREPQHEEL. Residues 76-184 form the DUSP domain; the sequence is PGLDSQWRQI…GQPPIERKVI (109 aa). At lysine 245 the chain carries N6-acetyllysine. The USP domain maps to 309–930; that stretch reads CGLTNLGNTC…AAYVLFYQRQ (622 aa). Residue cysteine 318 is the Nucleophile of the active site. Disordered regions lie at residues 644-691 and 716-735; these read TKPN…SGVT and LFTL…TSPE. A Phosphoserine modification is found at serine 648. Residues 649–665 are compositionally biased toward acidic residues; sequence DDEDDGDEKEDDEEDKD. Residues 717–731 are compositionally biased toward polar residues; the sequence is FTLQTVNSNGTSDRT. Serine 733 carries the post-translational modification Phosphoserine. Histidine 888 functions as the Proton acceptor in the catalytic mechanism. The span at 938–957 shows a compositional bias: low complexity; that stretch reads SPAGSSGAPASPACSSPPSS. The tract at residues 938–963 is disordered; it reads SPAGSSGAPASPACSSPPSSEFMDVN. At serine 948 the chain carries Phosphoserine.

This sequence belongs to the peptidase C19 family. Monomer. Associated component of the Polycomb group (PcG) multiprotein PRC1-like complex. Interacts with RANBP9/RANBPM. Interacts with BRCA2. Interacts with CHUK/IKKA. Interacts with NFKBIA. Interacts with SPRY3, RAE1, MYCBP2/PAM, and KCTD6. In terms of assembly, (Microbial infection) Interacts with papilloma virus protein 16E7.

The protein localises to the nucleus. Its subcellular location is the cytoplasm. It is found in the chromosome. It carries out the reaction Thiol-dependent hydrolysis of ester, thioester, amide, peptide and isopeptide bonds formed by the C-terminal Gly of ubiquitin (a 76-residue protein attached to proteins as an intracellular targeting signal).. In terms of biological role, protease that can remove conjugated ubiquitin from target proteins and polyubiquitin chains. Inhibits the degradation of target proteins by the proteasome. Cleaves preferentially 'Lys-6' and 'Lys-63'-linked ubiquitin chains. Has lower activity with 'Lys-11' and 'Lys-33'-linked ubiquitin chains, and extremely low activity with 'Lys-27', 'Lys-29' and 'Lys-48'-linked ubiquitin chains (in vitro). Plays a role in the regulation of pathways leading to NF-kappa-B activation. Plays a role in the regulation of DNA repair after double-stranded DNA breaks. Acts as a chromatin regulator via its association with the Polycomb group (PcG) multiprotein PRC1-like complex; may act by deubiquitinating components of the PRC1-like complex. Promotes cell proliferation by deubiquitinating phosphorylated E2F1. The sequence is that of Ubiquitin carboxyl-terminal hydrolase 11 (USP11) from Homo sapiens (Human).